Here is a 315-residue protein sequence, read N- to C-terminus: Glutamine synthetase nodule isozyme (315 aa).

Residues 19 to 99 (IIAEYIWVGG…VICDTYTPSG (81 aa)) form the GS beta-grasp domain. The GS catalytic domain maps to 106–315 (KRHAAAKIFS…WGVANRGASI (210 aa)).

This sequence belongs to the glutamine synthetase family. As to quaternary structure, homooctamer.

The protein resides in the cytoplasm. The enzyme catalyses L-glutamate + NH4(+) + ATP = L-glutamine + ADP + phosphate + H(+). In Lupinus angustifolius (Narrow-leaved blue lupine), this protein is Glutamine synthetase nodule isozyme.